Here is a 1225-residue protein sequence, read N- to C-terminus: uncharacterized protein (1225 aa).

Residues 1 to 15 (MSSQAEPSKGASNAD) show a composition bias toward polar residues. The interval 1 to 104 (MSSQAEPSKG…VDGVPTRPVS (104 aa)) is disordered. A compositionally biased stretch (basic and acidic residues) spans 16–25 (PNEKVEKMHL). Polar residues predominate over residues 43–65 (ASPSDKNNLNPQSAGVSEVQVQD). A helical membrane pass occupies residues 167–187 (FLFGYLRFGFLSLFIIMAVCI). An SMP-LTD domain is found at 217–422 (DSETVTWLNT…SPNVYELDIE (206 aa)). 3 consecutive C2 domains span residues 413–534 (SPNV…NDAF), 559–668 (DSGE…LLWF), and 685–803 (KPAQ…GALM). Position 843 is a phosphoserine (serine 843). Residues 867–890 (PESQKTPTAVDNTSTSRGSTSVKT) are disordered. A compositionally biased stretch (polar residues) spans 869-890 (SQKTPTAVDNTSTSRGSTSVKT). One can recognise a C2 4 domain in the interval 1019 to 1137 (RLTPVPVKLE…QQQQQTNYEI (119 aa)). The Ca(2+) site is built by aspartate 1053, aspartate 1059, aspartate 1107, aspartate 1109, and aspartate 1115.

It depends on Ca(2+) as a cofactor.

The protein resides in the endoplasmic reticulum membrane. This is an uncharacterized protein from Schizosaccharomyces pombe (strain 972 / ATCC 24843) (Fission yeast).